The primary structure comprises 1040 residues: Contactin-2 (1040 aa).

Residues Met1–Ser30 form the signal peptide. Ig-like C2-type domains are found at residues Pro39–Arg130, Gln135–Ser224, Pro241–Ile324, Pro329–Ala413, Pro419–Ser506, and Thr511–Leu605. 4 disulfide bridges follow: Cys63–Cys113, Cys157–Cys209, Cys263–Cys308, and Cys350–Cys397. N-linked (GlcNAc...) asparagine glycosylation is found at Asn78, Asn200, and Asn206. Residues Asn463, Asn479, Asn500, and Asn527 are each glycosylated (N-linked (GlcNAc...) asparagine). 4 consecutive Fibronectin type-III domains span residues Pro612–Ala710, Ala715–Glu812, Ala817–Pro913, and Pro917–Thr1008. A glycan (N-linked (GlcNAc...) asparagine) is linked at Asn777. Positions Arg796–Asp798 match the Cell attachment site motif. Residues Asn832, Asn920, and Asn942 are each glycosylated (N-linked (GlcNAc...) asparagine). The interval Gly897–Ser922 is disordered. The GPI-anchor amidated serine moiety is linked to residue Ser1014. The propeptide at Ser1015 to Leu1040 is removed in mature form.

It belongs to the immunoglobulin superfamily. Contactin family.

The protein localises to the cell membrane. Functionally, in conjunction with another transmembrane protein, CNTNAP2, contributes to the organization of axonal domains at nodes of Ranvier by maintaining voltage-gated potassium channels at the juxtaparanodal region. The sequence is that of Contactin-2 (Cntn2) from Mus musculus (Mouse).